A 608-amino-acid polypeptide reads, in one-letter code: Protein transport protein SEC9 (608 aa).

Disordered regions lie at residues 1 to 23 and 50 to 307; these read MGFK…SMQD and VTQK…QTAA. Residues 9–21 are compositionally biased toward basic and acidic residues; it reads KKDPTESEIRESM. Low complexity-rich tracts occupy residues 54-67 and 74-85; these read SSAA…NPYA and SGGNPYAAAAAG. Residues 100–121 are compositionally biased toward gly residues; sequence NGGGGNGGSNSNGGSNSNGGSN. Positions 122–134 are enriched in low complexity; that stretch reads GSPYKMNNGGNNA. Positions 169-183 are enriched in basic and acidic residues; sequence SKKEEAPPPLEDPRL. A compositionally biased stretch (acidic residues) spans 198–215; that stretch reads ERDDYEPVYDVGLPEEPE. The segment covering 241 to 260 has biased composition (basic and acidic residues); it reads NVDRELEEDKTALFGPRDDP. In terms of domain architecture, t-SNARE coiled-coil homology 1 spans 390 to 452; sequence RFTKQQSAAS…KIAEDKAKEL (63 aa). The tract at residues 514-533 is disordered; it reads GEKSKHRKEMMSKYGSRPGR. Positions 545 to 607 constitute a t-SNARE coiled-coil homology 2 domain; it reads DILEDEIDNN…HLNTARLAGI (63 aa).

Belongs to the SNAP-25 family.

The polypeptide is Protein transport protein SEC9 (SEC9) (Yarrowia lipolytica (strain CLIB 122 / E 150) (Yeast)).